The primary structure comprises 107 residues: Nucleoid-associated protein BT_0257 (107 aa).

This sequence belongs to the YbaB/EbfC family. In terms of assembly, homodimer.

It localises to the cytoplasm. The protein localises to the nucleoid. In terms of biological role, binds to DNA and alters its conformation. May be involved in regulation of gene expression, nucleoid organization and DNA protection. The sequence is that of Nucleoid-associated protein BT_0257 from Bartonella tribocorum (strain CIP 105476 / IBS 506).